The sequence spans 249 residues: L-fucose operon activator (249 aa).

The HTH deoR-type domain maps to 1 to 56 (MNYRDELILQWVNQQGKASVIELAQHCDISVETIRRDLNKLANKGLLHRTHGGAVS). A DNA-binding region (H-T-H motif) is located at residues 18–37 (ASVIELAQHCDISVETIRRD).

Transcriptional activator of the fuc operon. In Haemophilus influenzae (strain ATCC 51907 / DSM 11121 / KW20 / Rd), this protein is L-fucose operon activator (fucR).